A 152-amino-acid polypeptide reads, in one-letter code: Xanthine-guanine phosphoribosyltransferase (152 aa).

Residues Arg-37 to Gly-38, Arg-69, and Asp-88 to Thr-96 each bind 5-phospho-alpha-D-ribose 1-diphosphate. Arg-69 serves as a coordination point for GMP. Residue Asp-89 coordinates Mg(2+). The guanine site is built by Asp-92 and Ile-135. 2 residues coordinate xanthine: Asp-92 and Ile-135. Residues Asp-92–Thr-96 and Trp-134–Ile-135 contribute to the GMP site.

The protein belongs to the purine/pyrimidine phosphoribosyltransferase family. XGPT subfamily. As to quaternary structure, homotetramer. Mg(2+) serves as cofactor.

It localises to the cell inner membrane. The catalysed reaction is GMP + diphosphate = guanine + 5-phospho-alpha-D-ribose 1-diphosphate. It catalyses the reaction XMP + diphosphate = xanthine + 5-phospho-alpha-D-ribose 1-diphosphate. The enzyme catalyses IMP + diphosphate = hypoxanthine + 5-phospho-alpha-D-ribose 1-diphosphate. Its pathway is purine metabolism; GMP biosynthesis via salvage pathway; GMP from guanine: step 1/1. The protein operates within purine metabolism; XMP biosynthesis via salvage pathway; XMP from xanthine: step 1/1. Functionally, purine salvage pathway enzyme that catalyzes the transfer of the ribosyl-5-phosphate group from 5-phospho-alpha-D-ribose 1-diphosphate (PRPP) to the N9 position of the 6-oxopurines guanine and xanthine to form the corresponding ribonucleotides GMP (guanosine 5'-monophosphate) and XMP (xanthosine 5'-monophosphate), with the release of PPi. To a lesser extent, also acts on hypoxanthine. The protein is Xanthine-guanine phosphoribosyltransferase of Escherichia coli O7:K1 (strain IAI39 / ExPEC).